The following is a 256-amino-acid chain: Triosephosphate isomerase (256 aa).

9–11 is a substrate binding site; it reads NWK. Residue histidine 95 is the Electrophile of the active site. Glutamate 167 functions as the Proton acceptor in the catalytic mechanism. Substrate-binding positions include glycine 173, serine 213, and 234-235; that span reads GG.

Belongs to the triosephosphate isomerase family. As to quaternary structure, homodimer.

The protein resides in the cytoplasm. The catalysed reaction is D-glyceraldehyde 3-phosphate = dihydroxyacetone phosphate. It functions in the pathway carbohydrate biosynthesis; gluconeogenesis. It participates in carbohydrate degradation; glycolysis; D-glyceraldehyde 3-phosphate from glycerone phosphate: step 1/1. Involved in the gluconeogenesis. Catalyzes stereospecifically the conversion of dihydroxyacetone phosphate (DHAP) to D-glyceraldehyde-3-phosphate (G3P). The polypeptide is Triosephosphate isomerase (Symbiobacterium thermophilum (strain DSM 24528 / JCM 14929 / IAM 14863 / T)).